The following is a 115-amino-acid chain: NADH-ubiquinone oxidoreductase chain 3 (115 aa).

3 helical membrane-spanning segments follow: residues 5–25, 55–75, and 86–106; these read LTFM…FWLP, FFLV…LLPL, and LMLT…AYEW.

It belongs to the complex I subunit 3 family. As to quaternary structure, core subunit of respiratory chain NADH dehydrogenase (Complex I) which is composed of 45 different subunits. Interacts with TMEM186. Interacts with TMEM242.

It is found in the mitochondrion inner membrane. The catalysed reaction is a ubiquinone + NADH + 5 H(+)(in) = a ubiquinol + NAD(+) + 4 H(+)(out). In terms of biological role, core subunit of the mitochondrial membrane respiratory chain NADH dehydrogenase (Complex I) which catalyzes electron transfer from NADH through the respiratory chain, using ubiquinone as an electron acceptor. Essential for the catalytic activity of complex I. The sequence is that of NADH-ubiquinone oxidoreductase chain 3 from Avahi unicolor (Sambirano woolly lemur).